The primary structure comprises 158 residues: Transcriptional repressor NrdR (158 aa).

A zinc finger lies at 3 to 34 (CPYCGYPDSRVIDSRPTDDNTAIRRRRECLKC). One can recognise an ATP-cone domain in the interval 49–139 (ILVIKKDNRR…VYRQFKDINT (91 aa)).

This sequence belongs to the NrdR family. Zn(2+) serves as cofactor.

In terms of biological role, negatively regulates transcription of bacterial ribonucleotide reductase nrd genes and operons by binding to NrdR-boxes. This is Transcriptional repressor NrdR from Caldanaerobacter subterraneus subsp. tengcongensis (strain DSM 15242 / JCM 11007 / NBRC 100824 / MB4) (Thermoanaerobacter tengcongensis).